The sequence spans 360 residues: Ribosomal RNA large subunit methyltransferase F (360 aa).

The segment at 1 to 36 (MSKLISKQGKRPALSQSGLAKPSTSKKSSASKNANT) is disordered. The segment covering 23–36 (STSKKSSASKNANT) has biased composition (low complexity).

This sequence belongs to the methyltransferase superfamily. METTL16/RlmF family.

It is found in the cytoplasm. The catalysed reaction is adenosine(1618) in 23S rRNA + S-adenosyl-L-methionine = N(6)-methyladenosine(1618) in 23S rRNA + S-adenosyl-L-homocysteine + H(+). In terms of biological role, specifically methylates the adenine in position 1618 of 23S rRNA. The chain is Ribosomal RNA large subunit methyltransferase F from Shewanella denitrificans (strain OS217 / ATCC BAA-1090 / DSM 15013).